The following is a 465-amino-acid chain: Phytase A (465 aa).

A signal peptide spans 1-26 (MVTLTFLLSAAYLLSGRVSAAPSSAG). Cysteine 30 and cysteine 39 are disulfide-bonded. Positions 49, 50, 80, 81, 84, and 87 each coordinate 1D-myo-inositol hexakisphosphate. 4 cysteine pairs are disulfide-bonded: cysteine 70–cysteine 412, cysteine 213–cysteine 463, cysteine 262–cysteine 280, and cysteine 434–cysteine 442. The Nucleophile role is filled by histidine 81. N-linked (GlcNAc...) asparagine glycosylation occurs at asparagine 104. A 1D-myo-inositol hexakisphosphate-binding site is contributed by arginine 164. Asparagine 205 carries an N-linked (GlcNAc...) asparagine glycan. Aspartate 209 is a binding site for 1D-myo-inositol hexakisphosphate. Asparagine 228 carries N-linked (GlcNAc...) asparagine glycosylation. Lysine 299 contributes to the 1D-myo-inositol hexakisphosphate binding site. N-linked (GlcNAc...) asparagine glycosylation is found at asparagine 337 and asparagine 350. Residues histidine 359 and aspartate 360 each coordinate 1D-myo-inositol hexakisphosphate. A glycan (N-linked (GlcNAc...) asparagine) is linked at asparagine 374.

This sequence belongs to the histidine acid phosphatase family. Monomer.

It is found in the secreted. It catalyses the reaction 1D-myo-inositol hexakisphosphate + H2O = 1D-myo-inositol 1,2,4,5,6-pentakisphosphate + phosphate. It carries out the reaction 1D-myo-inositol 1,2,4,5,6-pentakisphosphate + H2O = 1D-myo-inositol 1,2,5,6-tetrakisphosphate + phosphate. The enzyme catalyses 1D-myo-inositol 1,2,5,6-tetrakisphosphate + H2O = 1D-myo-inositol 1,2,6-trisphosphate + phosphate. The catalysed reaction is 1D-myo-inositol 1,2,6-trisphosphate + H2O = 1D-myo-inositol 1,2-bisphosphate + phosphate. It catalyses the reaction 1D-myo-inositol 1,2-bisphosphate + H2O = 1D-myo-inositol 2-phosphate + phosphate. In terms of biological role, catalyzes the phosphate monoester hydrolysis of phytic acid (myo-inositol hexakisphosphate), which results in the stepwise formation of myo-inositol pentakis-, tetrakis-, tris-, bis-, and monophosphates, as well as the liberation of inorganic phosphate. Myo-inositol 2-monophosphate is the end product. Has a broad substrate specificity and is also able to dephosphorylate other classic acid phosphatase substrates such as p-nitrophenyl phosphate, phenyl phosphate, fructose 1,6-bisphosphate, fructose 6-phosphate, glucose 6-phosphate, ribose 5-phosphate, alpha-glycerophosphate, beta-glycerophosphate, 3-phosphoglycerate, phosphoenolpyruvate, as well as ADP and ATP. This is Phytase A (phyA) from Aspergillus fumigatus (strain ATCC MYA-4609 / CBS 101355 / FGSC A1100 / Af293) (Neosartorya fumigata).